The chain runs to 268 residues: Indole-3-glycerol phosphate synthase (268 aa).

The protein belongs to the TrpC family.

The enzyme catalyses 1-(2-carboxyphenylamino)-1-deoxy-D-ribulose 5-phosphate + H(+) = (1S,2R)-1-C-(indol-3-yl)glycerol 3-phosphate + CO2 + H2O. Its pathway is amino-acid biosynthesis; L-tryptophan biosynthesis; L-tryptophan from chorismate: step 4/5. This chain is Indole-3-glycerol phosphate synthase, found in Magnetococcus marinus (strain ATCC BAA-1437 / JCM 17883 / MC-1).